The following is a 132-amino-acid chain: Ribosome-binding factor A (132 aa).

Belongs to the RbfA family. Monomer. Binds 30S ribosomal subunits, but not 50S ribosomal subunits or 70S ribosomes.

Its subcellular location is the cytoplasm. Its function is as follows. One of several proteins that assist in the late maturation steps of the functional core of the 30S ribosomal subunit. Associates with free 30S ribosomal subunits (but not with 30S subunits that are part of 70S ribosomes or polysomes). Required for efficient processing of 16S rRNA. May interact with the 5'-terminal helix region of 16S rRNA. This Pseudomonas putida (strain W619) protein is Ribosome-binding factor A.